A 137-amino-acid chain; its full sequence is Large ribosomal subunit protein bL17 (137 aa).

It belongs to the bacterial ribosomal protein bL17 family. As to quaternary structure, part of the 50S ribosomal subunit. Contacts protein L32.

The chain is Large ribosomal subunit protein bL17 from Caulobacter vibrioides (strain ATCC 19089 / CIP 103742 / CB 15) (Caulobacter crescentus).